Here is a 401-residue protein sequence, read N- to C-terminus: MTMGNFLKRFGSGKSRSSRNMTLGTTSSQSHEPSPSDPSLSLADNTNATKKKYALIPDRFSSLDQVSKALREAGLESSNLILGVDFTKSNEWTGKTSFDGKCLHALGETSNPYEKAIFVIGQTLAPFDEDNLIPCFGFGDSTTHDEEVFGFHSDNSPCHGFEEVLACYKRIAPNLRLSGPTSYGPLIDAAVDIVEKNNGQFHVLVIVADGQVTRGTDMAEGELSQQEKTTIDAIVNASSYALSIVLVGVGDGPWEDMRKFDDKIPKREFDNFQFVNFTEIMTRNSPESAKETAFALAALMEIPFQYQAAIELRLLGKQTGLAKTIVPRPPPIPYTPPTNAELPSTASPASPEQTQSCPICLTNRKDVAFSCGHMTCGDCGSKISNCPICRVRITNRLKLYT.

The interval M1–A43 is disordered. A compositionally biased stretch (low complexity) spans K8–R19. The segment covering N20 to E32 has biased composition (polar residues). In terms of domain architecture, VWFA spans N79–L299. Residues V326–S350 are disordered. Over residues P327 to P336 the composition is skewed to pro residues. Over residues E341–S350 the composition is skewed to polar residues. The RING-type zinc finger occupies C357–R390.

In terms of assembly, interacts with UBC30, GRXS17 and GLB3. Widely expressed.

It is found in the cytoplasm. It localises to the nucleus. The enzyme catalyses S-ubiquitinyl-[E2 ubiquitin-conjugating enzyme]-L-cysteine + [acceptor protein]-L-lysine = [E2 ubiquitin-conjugating enzyme]-L-cysteine + N(6)-ubiquitinyl-[acceptor protein]-L-lysine.. In terms of biological role, possesses E3 ubiquitin-protein ligase in vitro. Acts as upstream modulator of jasmonate (JA) signaling in response to various stimuli, such as JA-inhibited root growth, JA-inductive gene expression, coronatine-mediated pathogen susceptibility, wound-stimulated expression of JA-responsive genes and wound-induced JA biosynthesis. Controls fumonisin B1 (FB1)-triggered programmed cell death (PCD) by modulating the JA signaling pathway. May mediate salicylic acid (SA) suppression of JA signaling in FB1-induced responses. May mediate the formation of 'Lys-48'-linked multiubiquitin chains. Mediates the polyubiquitination and subsequent proteasomal degradation of the target protein GRXS17. This is E3 ubiquitin-protein ligase RGLG4 from Arabidopsis thaliana (Mouse-ear cress).